The chain runs to 351 residues: Putative F-box protein At4g09790 (351 aa).

Positions 1–51 (MTTICDLPRDLVARILSRVPLTSMRRVRFTCKRWNTISKDPSFAKTHFGKA) constitute an F-box domain.

In Arabidopsis thaliana (Mouse-ear cress), this protein is Putative F-box protein At4g09790.